We begin with the raw amino-acid sequence, 635 residues long: Kelch-like protein 31 (635 aa).

The BTB domain maps to C74 to L138. The BACK domain occupies C173–Q274. Kelch repeat units lie at residues V318–G366, F367–G420, L421–G467, I469–D514, A516–N566, and K567–I615.

Strongly expressed in fast skeletal muscle, and weakly in heart. Not expressed in other tissues.

The protein is Kelch-like protein 31 (klhl31) of Danio rerio (Zebrafish).